Here is an 88-residue protein sequence, read N- to C-terminus: Small ribosomal subunit protein uS15 (88 aa).

Belongs to the universal ribosomal protein uS15 family. As to quaternary structure, part of the 30S ribosomal subunit. Forms a bridge to the 50S subunit in the 70S ribosome, contacting the 23S rRNA.

In terms of biological role, one of the primary rRNA binding proteins, it binds directly to 16S rRNA where it helps nucleate assembly of the platform of the 30S subunit by binding and bridging several RNA helices of the 16S rRNA. Functionally, forms an intersubunit bridge (bridge B4) with the 23S rRNA of the 50S subunit in the ribosome. The chain is Small ribosomal subunit protein uS15 from Mycoplasma capricolum subsp. capricolum (strain California kid / ATCC 27343 / NCTC 10154).